The chain runs to 291 residues: Acetylglutamate kinase (291 aa).

Residues 64 to 65 (GG), R86, and N190 each bind substrate.

This sequence belongs to the acetylglutamate kinase family. ArgB subfamily.

Its subcellular location is the cytoplasm. The enzyme catalyses N-acetyl-L-glutamate + ATP = N-acetyl-L-glutamyl 5-phosphate + ADP. The protein operates within amino-acid biosynthesis; L-arginine biosynthesis; N(2)-acetyl-L-ornithine from L-glutamate: step 2/4. Its function is as follows. Catalyzes the ATP-dependent phosphorylation of N-acetyl-L-glutamate. This chain is Acetylglutamate kinase, found in Leptospira borgpetersenii serovar Hardjo-bovis (strain JB197).